The chain runs to 155 residues: Small ribosomal subunit protein uS7 (155 aa).

This sequence belongs to the universal ribosomal protein uS7 family. Part of the 30S ribosomal subunit. Contacts proteins S9 and S11.

Its function is as follows. One of the primary rRNA binding proteins, it binds directly to 16S rRNA where it nucleates assembly of the head domain of the 30S subunit. Is located at the subunit interface close to the decoding center, probably blocks exit of the E-site tRNA. The polypeptide is Small ribosomal subunit protein uS7 (Xanthomonas oryzae pv. oryzae (strain MAFF 311018)).